The sequence spans 228 residues: Aquaporin Z (228 aa).

Transmembrane regions (helical) follow at residues 1–21 (MLNK…GGCG) and 23–43 (AILA…ALAF). The NPA 1 motif lies at 63–65 (NPA). Helical transmembrane passes span 82–102 (IPYW…LYVI), 129–149 (MMAG…IILG), and 154–174 (LAPA…IHLV). Residues 184–186 (NPA) carry the NPA 2 motif. The chain crosses the membrane as a helical span at residues 205–225 (LFWVAPLVGAVIGAIIWKGLL).

The protein belongs to the MIP/aquaporin (TC 1.A.8) family. Homotetramer.

The protein resides in the cell inner membrane. The catalysed reaction is H2O(in) = H2O(out). Channel that permits osmotically driven movement of water in both directions. It is involved in the osmoregulation and in the maintenance of cell turgor during volume expansion in rapidly growing cells. It mediates rapid entry or exit of water in response to abrupt changes in osmolarity. The polypeptide is Aquaporin Z (Brucella melitensis biotype 1 (strain ATCC 23456 / CCUG 17765 / NCTC 10094 / 16M)).